A 366-amino-acid polypeptide reads, in one-letter code: Inhibin alpha chain (366 aa).

Residues 1 to 20 (MVIQPSLLLLLLLTLQDVDS) form the signal peptide. A propeptide spanning residues 21 to 63 (CQGPELVRELVLAKVKALFLDALGPPAMDGEGGGPGIRRLPRR) is cleaved from the precursor. Residues 64–233 (HALGGFMHRT…APSAGERARR (170 aa)) constitute a propeptide, inhibin alpha N-terminal region. Asn147 and Asn269 each carry an N-linked (GlcNAc...) asparagine glycan. 3 disulfides stabilise this stretch: Cys263/Cys328, Cys292/Cys363, and Cys296/Cys365.

Belongs to the TGF-beta family. Dimeric, linked by one or more disulfide bonds. Activin B is a dimer of alpha and beta-B. Inhibin A is a dimer of alpha and beta-A. Inhibin B is a dimer of alpha and beta-B. Interacts with TGFBR3L; this interaction regulates female fertility. Proteolytic processing yields a number of bioactive forms, consisting either solely of the mature alpha chain, of the most N-terminal propeptide linked through a disulfide bond to the mature alpha chain, or of the entire proprotein. In terms of tissue distribution, mainly expressed in ovary and testis. Alpha- and beta-B-subunits are the predominant forms found in testis. Also found in placenta, pituitary, adrenal gland, bone marrow, kidney, spinal cord and brain.

It localises to the secreted. Its function is as follows. Inhibins and activins inhibit and activate, respectively, the secretion of follitropin by the pituitary gland. Inhibins/activins are involved in regulating a number of diverse functions such as hypothalamic and pituitary hormone secretion, gonadal hormone secretion, germ cell development and maturation, erythroid differentiation, insulin secretion, nerve cell survival, embryonic axial development or bone growth, depending on their subunit composition. Inhibins appear to oppose the functions of activins. Functionally, inhibin A is a dimer of alpha/INHA and beta-A/INHBA that functions as a feedback regulator in the hypothalamic-pituitary-gonadal (HPG) axis. Inhibits the secretion of FSH from the anterior pituitary gland by acting on pituitary gonadotrope cells. Antagonizes activin A by binding to the proteoglycan, betaglycan, and forming a stable complex with and, thereby, sequestering type II activin receptors while excluding type I receptor. In terms of biological role, inhibin B is a dimer of alpha and beta-B that plays a crucial role in the regulation of the reproductive system by inhibiting the secretion of follicle-stimulating hormone (FSH) from the anterior pituitary gland. Thereby, maintains reproductive homeostasis in both males and females. Acts as a more potent suppressor of FSH release than inhibin A. Functions as competitive receptor antagonist binding activin type II receptors with high affinity in the presence of the TGF-beta type III coreceptor/TGFBR3L. This is Inhibin alpha chain (Inha) from Rattus norvegicus (Rat).